Reading from the N-terminus, the 158-residue chain is MIITEILGNRAQLSADEIAQYTEEKVKLPNLDLVKRIQRVTTDADREIGLRLPSEVKELKDGDILYQNDSLLITVEVLPTDVLVYRPRNTLEMGKVAHSLGNRHLQAQFFGEDSEYGETVMVLQYDHTVEDHLKHVDAQYSREDRVMPEAFRHAEHSH.

Belongs to the UreE family.

It localises to the cytoplasm. Its function is as follows. Involved in urease metallocenter assembly. Binds nickel. Probably functions as a nickel donor during metallocenter assembly. This chain is Urease accessory protein UreE, found in Corynebacterium urealyticum (strain ATCC 43042 / DSM 7109).